Consider the following 405-residue polypeptide: Serpin I2 (405 aa).

The first 18 residues, 1–18 (MDTIFLWSLLLLFFGSQA), serve as a signal peptide directing secretion. N-linked (GlcNAc...) asparagine glycans are attached at residues N202, N207, and N306.

It belongs to the serpin family. As to expression, expressed in pancreas and adipose tissues.

It is found in the secreted. This Homo sapiens (Human) protein is Serpin I2 (SERPINI2).